The primary structure comprises 191 residues: Ribosomal RNA small subunit methyltransferase G (191 aa).

Residues G62, F67, 111 to 112 (IE), and R124 each bind S-adenosyl-L-methionine.

The protein belongs to the methyltransferase superfamily. RNA methyltransferase RsmG family.

It localises to the cytoplasm. It carries out the reaction guanosine(527) in 16S rRNA + S-adenosyl-L-methionine = N(7)-methylguanosine(527) in 16S rRNA + S-adenosyl-L-homocysteine. Its function is as follows. Specifically methylates the N7 position of guanine in position 527 of 16S rRNA. The polypeptide is Ribosomal RNA small subunit methyltransferase G (Rickettsia akari (strain Hartford)).